Reading from the N-terminus, the 256-residue chain is Imidazole glycerol phosphate synthase subunit HisF (256 aa).

Active-site residues include D12 and D131.

It belongs to the HisA/HisF family. In terms of assembly, heterodimer of HisH and HisF.

It is found in the cytoplasm. The enzyme catalyses 5-[(5-phospho-1-deoxy-D-ribulos-1-ylimino)methylamino]-1-(5-phospho-beta-D-ribosyl)imidazole-4-carboxamide + L-glutamine = D-erythro-1-(imidazol-4-yl)glycerol 3-phosphate + 5-amino-1-(5-phospho-beta-D-ribosyl)imidazole-4-carboxamide + L-glutamate + H(+). Its pathway is amino-acid biosynthesis; L-histidine biosynthesis; L-histidine from 5-phospho-alpha-D-ribose 1-diphosphate: step 5/9. In terms of biological role, IGPS catalyzes the conversion of PRFAR and glutamine to IGP, AICAR and glutamate. The HisF subunit catalyzes the cyclization activity that produces IGP and AICAR from PRFAR using the ammonia provided by the HisH subunit. The chain is Imidazole glycerol phosphate synthase subunit HisF from Pseudomonas entomophila (strain L48).